The sequence spans 213 residues: Ribosomal RNA small subunit methyltransferase G (213 aa).

S-adenosyl-L-methionine-binding positions include G77, F82, 130-131, and R146; that span reads IE.

This sequence belongs to the methyltransferase superfamily. RNA methyltransferase RsmG family.

The protein resides in the cytoplasm. It catalyses the reaction guanosine(527) in 16S rRNA + S-adenosyl-L-methionine = N(7)-methylguanosine(527) in 16S rRNA + S-adenosyl-L-homocysteine. Specifically methylates the N7 position of guanine in position 527 of 16S rRNA. This chain is Ribosomal RNA small subunit methyltransferase G, found in Bartonella tribocorum (strain CIP 105476 / IBS 506).